The sequence spans 361 residues: Protein SSUH2 homolog (361 aa).

Its subcellular location is the cytoplasm. It is found in the nucleus. Plays a role in odontogenesis. This Danio rerio (Zebrafish) protein is Protein SSUH2 homolog.